Reading from the N-terminus, the 447-residue chain is GTPase Der (447 aa).

EngA-type G domains are found at residues 4-165 (QIIT…PEEE) and 180-357 (LQIV…KIWN). GTP-binding positions include 10-17 (GRPNVGKS), 57-61 (DTPGL), 119-122 (NKCE), 186-193 (GRPNAGKS), 233-237 (DTAGL), and 298-301 (NKWD). One can recognise a KH-like domain in the interval 358–443 (KKITTSKLNE…PIRFIYVKTK (86 aa)).

This sequence belongs to the TRAFAC class TrmE-Era-EngA-EngB-Septin-like GTPase superfamily. EngA (Der) GTPase family. As to quaternary structure, associates with the 50S ribosomal subunit.

Its function is as follows. GTPase that plays an essential role in the late steps of ribosome biogenesis. The protein is GTPase Der of Rickettsia peacockii (strain Rustic).